A 208-amino-acid polypeptide reads, in one-letter code: Outer-membrane lipoprotein carrier protein (208 aa).

The N-terminal stretch at 1–23 (MKKTVKNLTALLTLALAAPWALA) is a signal peptide.

It belongs to the LolA family. In terms of assembly, monomer.

Its subcellular location is the periplasm. In terms of biological role, participates in the translocation of lipoproteins from the inner membrane to the outer membrane. Only forms a complex with a lipoprotein if the residue after the N-terminal Cys is not an aspartate (The Asp acts as a targeting signal to indicate that the lipoprotein should stay in the inner membrane). In Actinobacillus succinogenes (strain ATCC 55618 / DSM 22257 / CCUG 43843 / 130Z), this protein is Outer-membrane lipoprotein carrier protein.